A 133-amino-acid polypeptide reads, in one-letter code: Putative esterase STK_17900 (133 aa).

It belongs to the thioesterase PaaI family.

The polypeptide is Putative esterase STK_17900 (Sulfurisphaera tokodaii (strain DSM 16993 / JCM 10545 / NBRC 100140 / 7) (Sulfolobus tokodaii)).